The sequence spans 148 residues: METVSAVNQTLPISGGEPVKFTTYSAAVHKVLVMINAGILGLLQLVSQQSSVLETHKAAFLCFCVFILFYAVLRVREAMDVRLQPGLVPRLIGHGSHLFGGLAALVLVSVVSTAFSIVLFLLWFIWLSAVVYLETNKPSACPPQLPPV.

Residues 1-25 (METVSAVNQTLPISGGEPVKFTTYS) lie on the Cytoplasmic side of the membrane. The chain crosses the membrane as a helical span at residues 26–46 (AAVHKVLVMINAGILGLLQLV). The Lumenal portion of the chain corresponds to 47–51 (SQQSS). Residues 52–72 (VLETHKAAFLCFCVFILFYAV) form a helical membrane-spanning segment. At 73–90 (LRVREAMDVRLQPGLVPR) the chain is on the cytoplasmic side. The helical transmembrane segment at 91–110 (LIGHGSHLFGGLAALVLVSV) threads the bilayer. Over 111–116 (VSTAFS) the chain is Lumenal. Residues 117 to 133 (IVLFLLWFIWLSAVVYL) traverse the membrane as a helical segment. The Cytoplasmic portion of the chain corresponds to 134–148 (ETNKPSACPPQLPPV).

As to quaternary structure, forms pentamers with a central pore to produce an ion channel.

The protein resides in the endoplasmic reticulum membrane. It carries out the reaction Ca(2+)(in) = Ca(2+)(out). The catalysed reaction is Na(+)(in) = Na(+)(out). Its function is as follows. Calcium-permeable cation-selective channel conferring a broad-spectrum clubroot resistance by supporting cytosolic Ca(2+) increase in root pericycle cells. Triggers immunity toward fungal pathogens such as Plasmodiophora brassicae (Pb) and induces defenses. Also permeable to sodium ion Na(+) and possibly other cations. The protein is Calcium-permeable cation-selective channel WeiTsing of Arabidopsis thaliana (Mouse-ear cress).